The following is a 430-amino-acid chain: Histidinol dehydrogenase (430 aa).

The NAD(+) site is built by Tyr-129, Gln-190, and Asn-213. 3 residues coordinate substrate: Ser-236, Gln-258, and His-261. Gln-258 and His-261 together coordinate Zn(2+). Active-site proton acceptor residues include Glu-326 and His-327. Residues His-327, Asp-360, Glu-414, and His-419 each coordinate substrate. Residue Asp-360 participates in Zn(2+) binding. His-419 serves as a coordination point for Zn(2+).

It belongs to the histidinol dehydrogenase family. The cofactor is Zn(2+).

The catalysed reaction is L-histidinol + 2 NAD(+) + H2O = L-histidine + 2 NADH + 3 H(+). Its pathway is amino-acid biosynthesis; L-histidine biosynthesis; L-histidine from 5-phospho-alpha-D-ribose 1-diphosphate: step 9/9. Its function is as follows. Catalyzes the sequential NAD-dependent oxidations of L-histidinol to L-histidinaldehyde and then to L-histidine. This is Histidinol dehydrogenase from Caldanaerobacter subterraneus subsp. tengcongensis (strain DSM 15242 / JCM 11007 / NBRC 100824 / MB4) (Thermoanaerobacter tengcongensis).